A 246-amino-acid chain; its full sequence is 5-oxoprolinase subunit A (246 aa).

Belongs to the LamB/PxpA family. Forms a complex composed of PxpA, PxpB and PxpC.

The enzyme catalyses 5-oxo-L-proline + ATP + 2 H2O = L-glutamate + ADP + phosphate + H(+). Catalyzes the cleavage of 5-oxoproline to form L-glutamate coupled to the hydrolysis of ATP to ADP and inorganic phosphate. This is 5-oxoprolinase subunit A from Cupriavidus metallidurans (strain ATCC 43123 / DSM 2839 / NBRC 102507 / CH34) (Ralstonia metallidurans).